A 336-amino-acid polypeptide reads, in one-letter code: MVVKVGINGFGRIGRLAFRRIQNIEGVEVTRINDLTDPNMLAHLLKYDTTQGRFDGTVEVKEGGFEVNGNFIKVSAERDPENIDWATDGVEIVLEATGFFAKKEAAEKHLHANGAKKVVITAPGGNDVKTVVFNTNHDILDGTETVISGASCTTNCLAPMAKALHDAFGIQKGLMTTIHAYTGDQMILDGPHRGGDLRRARAGAANIVPNSTGAAKAIGLVIPELNGKLDGAAQRVPVPTGSVTELVVTLDKNVSVDEINSAMKAASNDSFGYTEDPIVSSDIVGVSYGSLFDATQTKVMEVDGSQLVKVVSWYDNEMSYTAQLVRTLEYFAKIAK.

NAD(+)-binding positions include 12–13, D34, R78, and T121; that span reads RI. D-glyceraldehyde 3-phosphate is bound by residues 151-153, T182, R199, 212-213, and R235; these read SCT and TG. The Nucleophile role is filled by C152. N316 contributes to the NAD(+) binding site.

The protein belongs to the glyceraldehyde-3-phosphate dehydrogenase family. Homotetramer.

The protein resides in the cytoplasm. The catalysed reaction is D-glyceraldehyde 3-phosphate + phosphate + NAD(+) = (2R)-3-phospho-glyceroyl phosphate + NADH + H(+). It functions in the pathway carbohydrate degradation; glycolysis; pyruvate from D-glyceraldehyde 3-phosphate: step 1/5. In terms of biological role, also binds human plasminogen. Its function is as follows. Catalyzes the oxidative phosphorylation of glyceraldehyde 3-phosphate (G3P) to 1,3-bisphosphoglycerate (BPG) using the cofactor NAD. The first reaction step involves the formation of a hemiacetal intermediate between G3P and a cysteine residue, and this hemiacetal intermediate is then oxidized to a thioester, with concomitant reduction of NAD to NADH. The reduced NADH is then exchanged with the second NAD, and the thioester is attacked by a nucleophilic inorganic phosphate to produce BPG. This Streptococcus pyogenes protein is Glyceraldehyde-3-phosphate dehydrogenase (gap).